Reading from the N-terminus, the 352-residue chain is MATQMVKGNTAVIIGAMYAGCDCYFGYPITPASEILHEASRYFPLVGRKFVQAESEEAAINMVYGAAAAGHRVMTASSGPGMSLKQEGISFLAGAELPAVIVDVMRAGPGLGNIGPEQADYNQLVKGGGHGNYRNIVLAPNSVQEMCDLTMDAFELADKYRNPVIILADAVLGQMAEPLRFPERAVEHRPDTSWAVCGSRETMKNLVTSIFLDFDELEEFNFYLQEKYAAVEENEVRYEEYMVEDAEIVLVAYGISSRVAKSAVDTARADGIKVGLLRPITLFPFPSERIRELAEGGCTFISVEMSSGQMREDIKMASGCRDVELVNRMGGNLIELRDILRKIREIAGESND.

As to quaternary structure, heterotrimer of the VorA, VorB and VorC subunits.

It carries out the reaction 3-methyl-2-oxobutanoate + 2 oxidized [2Fe-2S]-[ferredoxin] + CoA = 2-methylpropanoyl-CoA + 2 reduced [2Fe-2S]-[ferredoxin] + CO2 + H(+). This Methanothermobacter marburgensis (strain ATCC BAA-927 / DSM 2133 / JCM 14651 / NBRC 100331 / OCM 82 / Marburg) (Methanobacterium thermoautotrophicum) protein is Ketoisovalerate oxidoreductase subunit VorB (vorB).